A 429-amino-acid chain; its full sequence is Glutamate-1-semialdehyde 2,1-aminomutase (429 aa).

Position 265 is an N6-(pyridoxal phosphate)lysine (K265).

It belongs to the class-III pyridoxal-phosphate-dependent aminotransferase family. HemL subfamily. As to quaternary structure, homodimer. Pyridoxal 5'-phosphate is required as a cofactor.

Its subcellular location is the cytoplasm. The enzyme catalyses (S)-4-amino-5-oxopentanoate = 5-aminolevulinate. Its pathway is porphyrin-containing compound metabolism; protoporphyrin-IX biosynthesis; 5-aminolevulinate from L-glutamyl-tRNA(Glu): step 2/2. The sequence is that of Glutamate-1-semialdehyde 2,1-aminomutase from Acidobacterium capsulatum (strain ATCC 51196 / DSM 11244 / BCRC 80197 / JCM 7670 / NBRC 15755 / NCIMB 13165 / 161).